We begin with the raw amino-acid sequence, 220 residues long: Metalloproteinase inhibitor 2 (220 aa).

The signal sequence occupies residues 1 to 26 (MGAAARSLPLAFCLLLLGTLLPRADA). Cys-27 contributes to the Zn(2+) binding site. Residues 27–30 (CSCS) form an involved in metalloproteinase-binding region. Cystine bridges form between Cys-27–Cys-98, Cys-29–Cys-127, Cys-39–Cys-152, Cys-154–Cys-201, Cys-159–Cys-164, and Cys-172–Cys-193. Positions 27–152 (CSCSPVHPQQ…SLNHRYQMGC (126 aa)) constitute an NTR domain.

It belongs to the protease inhibitor I35 (TIMP) family. Interacts (via the C-terminal) with MMP2 (via the C-terminal PEX domain); the interaction inhibits the MMP2 activity. The activity of TIMP2 is dependent on the presence of disulfide bonds.

The protein resides in the secreted. In terms of biological role, complexes with metalloproteinases (such as collagenases) and irreversibly inactivates them by binding to their catalytic zinc cofactor. The sequence is that of Metalloproteinase inhibitor 2 (TIMP2) from Bos taurus (Bovine).